We begin with the raw amino-acid sequence, 137 residues long: Actin-depolymerizing factor 7 (137 aa).

Residue Ser-6 is modified to Phosphoserine. One can recognise an ADF-H domain in the interval Gly-7 to Leu-137.

This sequence belongs to the actin-binding proteins ADF family. In terms of tissue distribution, specifically expressed in pollen.

The protein resides in the cytoplasm. It localises to the cytoskeleton. In terms of biological role, actin-depolymerizing protein. Severs actin filaments (F-actin) and binds to actin monomers. Binds monomeric actin (G-actin) with a marked preference for the ADP-loaded form and inhibits the rate of nucleotide exchange on G-actin. Required for pollen tube growth. Promotes turnover of longitudinal actin cables by severing actin filaments in pollen tubes. In Arabidopsis thaliana (Mouse-ear cress), this protein is Actin-depolymerizing factor 7 (ADF7).